The primary structure comprises 235 residues: Pyridoxine 5'-phosphate synthase (235 aa).

N6 is a 3-amino-2-oxopropyl phosphate binding site. Residue 8–9 (DH) participates in 1-deoxy-D-xylulose 5-phosphate binding. R17 provides a ligand contact to 3-amino-2-oxopropyl phosphate. Catalysis depends on H42, which acts as the Proton acceptor. The 1-deoxy-D-xylulose 5-phosphate site is built by R44 and H49. E69 functions as the Proton acceptor in the catalytic mechanism. Residue T99 coordinates 1-deoxy-D-xylulose 5-phosphate. H189 functions as the Proton donor in the catalytic mechanism. Residues G190 and 211 to 212 (GH) contribute to the 3-amino-2-oxopropyl phosphate site.

It belongs to the PNP synthase family. In terms of assembly, homooctamer; tetramer of dimers.

It localises to the cytoplasm. The catalysed reaction is 3-amino-2-oxopropyl phosphate + 1-deoxy-D-xylulose 5-phosphate = pyridoxine 5'-phosphate + phosphate + 2 H2O + H(+). Its pathway is cofactor biosynthesis; pyridoxine 5'-phosphate biosynthesis; pyridoxine 5'-phosphate from D-erythrose 4-phosphate: step 5/5. Catalyzes the complicated ring closure reaction between the two acyclic compounds 1-deoxy-D-xylulose-5-phosphate (DXP) and 3-amino-2-oxopropyl phosphate (1-amino-acetone-3-phosphate or AAP) to form pyridoxine 5'-phosphate (PNP) and inorganic phosphate. This chain is Pyridoxine 5'-phosphate synthase, found in Chlorobium phaeovibrioides (strain DSM 265 / 1930) (Prosthecochloris vibrioformis (strain DSM 265)).